The sequence spans 232 residues: Ubiquinone biosynthesis O-methyltransferase (232 aa).

S-adenosyl-L-methionine-binding residues include arginine 36, glycine 55, aspartate 76, and leucine 120.

It belongs to the methyltransferase superfamily. UbiG/COQ3 family.

It catalyses the reaction a 3-demethylubiquinol + S-adenosyl-L-methionine = a ubiquinol + S-adenosyl-L-homocysteine + H(+). It carries out the reaction a 3-(all-trans-polyprenyl)benzene-1,2-diol + S-adenosyl-L-methionine = a 2-methoxy-6-(all-trans-polyprenyl)phenol + S-adenosyl-L-homocysteine + H(+). Its pathway is cofactor biosynthesis; ubiquinone biosynthesis. Functionally, O-methyltransferase that catalyzes the 2 O-methylation steps in the ubiquinone biosynthetic pathway. The chain is Ubiquinone biosynthesis O-methyltransferase from Pseudomonas fluorescens (strain ATCC BAA-477 / NRRL B-23932 / Pf-5).